Here is a 480-residue protein sequence, read N- to C-terminus: Glutamyl-tRNA(Gln) amidotransferase subunit A (480 aa).

Active-site charge relay system residues include K74 and S149. The active-site Acyl-ester intermediate is S173.

The protein belongs to the amidase family. GatA subfamily. Heterotrimer of A, B and C subunits.

The catalysed reaction is L-glutamyl-tRNA(Gln) + L-glutamine + ATP + H2O = L-glutaminyl-tRNA(Gln) + L-glutamate + ADP + phosphate + H(+). Functionally, allows the formation of correctly charged Gln-tRNA(Gln) through the transamidation of misacylated Glu-tRNA(Gln) in organisms which lack glutaminyl-tRNA synthetase. The reaction takes place in the presence of glutamine and ATP through an activated gamma-phospho-Glu-tRNA(Gln). This Prochlorococcus marinus (strain MIT 9312) protein is Glutamyl-tRNA(Gln) amidotransferase subunit A.